The chain runs to 343 residues: Dual-specificity RNA methyltransferase RlmN (343 aa).

E92 acts as the Proton acceptor in catalysis. Residues 98–325 enclose the Radical SAM core domain; the sequence is DEDRTTLCIS…VITRSSRGSD (228 aa). C105 and C330 are joined by a disulfide. Positions 112, 116, and 119 each coordinate [4Fe-4S] cluster. Residues 157–158, S189, 211–213, and N287 each bind S-adenosyl-L-methionine; these read GE and SLN. C330 acts as the S-methylcysteine intermediate in catalysis.

Belongs to the radical SAM superfamily. RlmN family. It depends on [4Fe-4S] cluster as a cofactor.

It is found in the cytoplasm. The catalysed reaction is adenosine(2503) in 23S rRNA + 2 reduced [2Fe-2S]-[ferredoxin] + 2 S-adenosyl-L-methionine = 2-methyladenosine(2503) in 23S rRNA + 5'-deoxyadenosine + L-methionine + 2 oxidized [2Fe-2S]-[ferredoxin] + S-adenosyl-L-homocysteine. The enzyme catalyses adenosine(37) in tRNA + 2 reduced [2Fe-2S]-[ferredoxin] + 2 S-adenosyl-L-methionine = 2-methyladenosine(37) in tRNA + 5'-deoxyadenosine + L-methionine + 2 oxidized [2Fe-2S]-[ferredoxin] + S-adenosyl-L-homocysteine. Functionally, specifically methylates position 2 of adenine 2503 in 23S rRNA and position 2 of adenine 37 in tRNAs. m2A2503 modification seems to play a crucial role in the proofreading step occurring at the peptidyl transferase center and thus would serve to optimize ribosomal fidelity. This is Dual-specificity RNA methyltransferase RlmN from Geotalea uraniireducens (strain Rf4) (Geobacter uraniireducens).